Reading from the N-terminus, the 256-residue chain is Floral homeotic protein APETALA 1 (256 aa).

Residues 1 to 61 enclose the MADS-box domain; sequence MGRGRVQLKR…GKLFEYSTDS (61 aa). Residues 88–178 form the K-box domain; sequence NTNWSMEYNR…SKQIKEREKV (91 aa). Positions 180–206 are disordered; that stretch reads RAQQEQWDQQNHGQNMPPPPPPQEHQI.

In terms of assembly, homodimer capable of binding to CArG-box sequences.

The protein resides in the nucleus. Transcription factor that promotes early floral meristem identity in synergy with LEAFY. Displays a redundant function with CAULIFLOWER in the up-regulation of LEAFY. Required subsequently for the transition of an inflorescence meristem into a floral meristem, and for the normal development of sepals and petals in flowers. Regulates positively B class homeotic proteins. This Brassica rapa subsp. pekinensis (Chinese cabbage) protein is Floral homeotic protein APETALA 1 (AP1).